Reading from the N-terminus, the 504-residue chain is Multidrug efflux pump LfrA (504 aa).

14 consecutive transmembrane segments (helical) span residues 19–39 (WVALAVLALPVLLIAIDNTVL), 58–78 (LWIVDVYSLVLAALLVAMGSL), 87–107 (LLLIGGAGFAVVSALAAFAPS), 110–130 (LLVGARALLGVFGAMLMPSTL), 145–165 (LAIAIWASCFTAGSALGPIVG), 172–192 (FHWGAVFLVAVPILLPLLVLG), 206–226 (PFDPVSIVLSFTTMLPIVWAV), 233–253 (GLSAAAAAAFAVGIVSGALFV), 275–295 (TSSILANFLSIIGLIGFIFFI), 309–329 (TAGLVTLPGAVVSMIAGLAVV), 338–358 (DTLMVTGLVFVAVGFLMILLF), 361–381 (NLTVAAIIASFVVLELGVGVS), 408–428 (AYELGAVVGTATLGTIFTAFY), and 480–500 (IAPTAVIAAMLVLAAAAVVGV).

This sequence belongs to the major facilitator superfamily.

The protein resides in the cell inner membrane. Inhibited by the protonophore carbonyl cyanide m-chorophenylhydrazone (CCCP). Ethidium bromide efflux is inhibited by chlorpromazine, thioridazine and verapamil. In terms of biological role, energy-dependent efflux pump that contributes to drug resistance. Catalyzes the efflux of norfloxacin and several related fluoroquinolones (FQ). Contributes significantly to the intrinsic MICs for ethidium bromide and acriflavine. Overexpression confers low-level resistance to hydrophilic FQ such as ciprofloxacin, ofloxacin and levofloxacin, and to ethidium bromide, acridine, acriflavine, rhodamine 123 and some quaternary ammonium compounds. May contribute to resistance to certain beta-lactams. Probably uses the proton motive force to export drugs. This chain is Multidrug efflux pump LfrA, found in Mycolicibacterium smegmatis (strain ATCC 700084 / mc(2)155) (Mycobacterium smegmatis).